The following is a 279-amino-acid chain: uncharacterized protein (279 aa).

The signal sequence occupies residues 1–21; that stretch reads MKIIRTLFLLLIAVYGSSVVA.

The protein to E.coli YfcO.

This is an uncharacterized protein from Salmonella typhimurium (strain LT2 / SGSC1412 / ATCC 700720).